We begin with the raw amino-acid sequence, 241 residues long: Golgi-associated RAB2 interactor protein 6 (241 aa).

It belongs to the GARIN family.

This Homo sapiens (Human) protein is Golgi-associated RAB2 interactor protein 6.